A 561-amino-acid polypeptide reads, in one-letter code: 3beta-hydroxysteroid-dehydrogenase/decarboxylase isoform 3 (561 aa).

Lys-166 serves as a coordination point for NAD(+). Residues 379–561 (VADILLWRNE…SDASSKPMFM (183 aa)) enclose the Reticulon domain. The next 3 helical transmembrane spans lie at 392–412 (FVSF…GNTF), 420–440 (LFIF…IFGF), and 504–524 (SLAA…FIYE).

It belongs to the 3-beta-HSD family.

The protein resides in the endoplasmic reticulum membrane. It catalyses the reaction a 3beta-hydroxysteroid-4alpha-carboxylate + NADP(+) = a 3-oxosteroid + CO2 + NADPH. The enzyme catalyses a 3beta-hydroxysteroid-4alpha-carboxylate + NAD(+) = a 3-oxosteroid + CO2 + NADH. It functions in the pathway steroid biosynthesis; zymosterol biosynthesis; zymosterol from lanosterol: step 4/6. The sequence is that of 3beta-hydroxysteroid-dehydrogenase/decarboxylase isoform 3 (3BETAHSD/D3) from Arabidopsis thaliana (Mouse-ear cress).